The primary structure comprises 422 residues: Serine--tRNA ligase (422 aa).

231 to 233 contacts L-serine; the sequence is TAE. Residue 261 to 263 participates in ATP binding; it reads RSE. Glu284 provides a ligand contact to L-serine. 348–351 contacts ATP; that stretch reads EISS. Ser383 is an L-serine binding site.

The protein belongs to the class-II aminoacyl-tRNA synthetase family. Type-1 seryl-tRNA synthetase subfamily. In terms of assembly, homodimer. The tRNA molecule binds across the dimer.

It is found in the cytoplasm. The catalysed reaction is tRNA(Ser) + L-serine + ATP = L-seryl-tRNA(Ser) + AMP + diphosphate + H(+). It carries out the reaction tRNA(Sec) + L-serine + ATP = L-seryl-tRNA(Sec) + AMP + diphosphate + H(+). It functions in the pathway aminoacyl-tRNA biosynthesis; selenocysteinyl-tRNA(Sec) biosynthesis; L-seryl-tRNA(Sec) from L-serine and tRNA(Sec): step 1/1. In terms of biological role, catalyzes the attachment of serine to tRNA(Ser). Is also able to aminoacylate tRNA(Sec) with serine, to form the misacylated tRNA L-seryl-tRNA(Sec), which will be further converted into selenocysteinyl-tRNA(Sec). This chain is Serine--tRNA ligase, found in Mycoplasmopsis agalactiae (strain NCTC 10123 / CIP 59.7 / PG2) (Mycoplasma agalactiae).